Here is a 163-residue protein sequence, read N- to C-terminus: NADH-quinone oxidoreductase subunit I (163 aa).

4Fe-4S ferredoxin-type domains lie at 55–84 (RRYP…IDAE) and 94–123 (TRYD…EGPN). Positions 64, 67, 70, 74, 103, 106, 109, and 113 each coordinate [4Fe-4S] cluster.

It belongs to the complex I 23 kDa subunit family. NDH-1 is composed of 14 different subunits. Subunits NuoA, H, J, K, L, M, N constitute the membrane sector of the complex. It depends on [4Fe-4S] cluster as a cofactor.

Its subcellular location is the cell inner membrane. The catalysed reaction is a quinone + NADH + 5 H(+)(in) = a quinol + NAD(+) + 4 H(+)(out). Its function is as follows. NDH-1 shuttles electrons from NADH, via FMN and iron-sulfur (Fe-S) centers, to quinones in the respiratory chain. The immediate electron acceptor for the enzyme in this species is believed to be ubiquinone. Couples the redox reaction to proton translocation (for every two electrons transferred, four hydrogen ions are translocated across the cytoplasmic membrane), and thus conserves the redox energy in a proton gradient. The polypeptide is NADH-quinone oxidoreductase subunit I (nuoI) (Rhodobacter capsulatus (Rhodopseudomonas capsulata)).